The primary structure comprises 659 residues: Protein phosphatase Slingshot homolog 3 (659 aa).

Residues 1 to 16 are compositionally biased toward polar residues; that stretch reads MALVTVSRSPPGSGAS. Residues 1–31 are disordered; the sequence is MALVTVSRSPPGSGASTPVGPWDQAVQRRSR. An N-acetylalanine modification is found at Ala2. Ser9 and Ser37 each carry phosphoserine. The segment at 46–96 is disordered; that stretch reads LGLQDGGDNDDAAEASSEPTEKAPSEEELHGDQTDFGQGSQSPQKQEEQRQ. A compositionally biased stretch (basic and acidic residues) spans 64 to 78; sequence PTEKAPSEEELHGDQ. The segment covering 80-89 has biased composition (polar residues); that stretch reads DFGQGSQSPQ. 2 positions are modified to phosphoserine: Ser85 and Ser87. The DEK-C domain occupies 269-324; sequence EQMEQAIRAELWKVLDVSDLESVTSKEIRQALELRLGLPLQQYRDFIDNQMLLLVA. Residues 328–469 form the Tyrosine-protein phosphatase domain; sequence RASRIFPHLY…LQIYQGILTA (142 aa). Cys413 serves as the catalytic Phosphocysteine intermediate. Disordered stretches follow at residues 482–534, 547–603, and 617–638; these read GVSP…RINL, SLEL…RQSV, and QAFQ…ISST. Residues 547–557 are compositionally biased toward low complexity; that stretch reads SLELESTSETS.

The protein belongs to the protein-tyrosine phosphatase family. As to quaternary structure, does not bind to, or colocalize with, filamentous actin.

The protein resides in the cytoplasm. It is found in the cytoskeleton. The protein localises to the nucleus. The enzyme catalyses O-phospho-L-tyrosyl-[protein] + H2O = L-tyrosyl-[protein] + phosphate. It catalyses the reaction O-phospho-L-seryl-[protein] + H2O = L-seryl-[protein] + phosphate. The catalysed reaction is O-phospho-L-threonyl-[protein] + H2O = L-threonyl-[protein] + phosphate. In terms of biological role, protein phosphatase which may play a role in the regulation of actin filament dynamics. Can dephosphorylate and activate the actin binding/depolymerizing factor cofilin, which subsequently binds to actin filaments and stimulates their disassembly. This is Protein phosphatase Slingshot homolog 3 (SSH3) from Homo sapiens (Human).